Consider the following 339-residue polypeptide: Probable cytosolic iron-sulfur protein assembly protein CIAO1 (339 aa).

7 WD repeats span residues His14–Lys53, Gly59–Val98, Gly103–Cys142, Ser148–Cys187, Gly192–Gly231, Phe250–Gln289, and Ala301–Leu339. Positions Leu176–Arg178 match the LYR motif; required for interaction with HSC20 motif.

The protein belongs to the WD repeat CIA1 family. Component of the CIA complex. Interacts with CIAO2A and forms a complex with CIAO2B and MMS19; the interactions with CIAO2A and CIAO2B are mutually exclusive. Interacts with CHD1L, ERCC2, IREB2 and POLD1. Component of the MMXD complex, which includes CIAO1, ERCC2, CIAO2B, MMS19 and SLC25A5. Interacts with WT1. Interacts with CIAO3. Interacts (via LYR motif) with HSC20.

The protein localises to the cytoplasm. Its function is as follows. Key component of the cytosolic iron-sulfur protein assembly (CIA) complex, a multiprotein complex that mediates the incorporation of iron-sulfur cluster into extramitochondrial Fe/S proteins. As a CIA complex component, interacts specifically with CIAO2A or CIAO2B and MMS19 to assist different branches of iron-sulfur protein assembly, depending of its interactors. The complex CIAO1:CIAO2B:MMS19 binds to and facilitates the assembly of most cytosolic-nuclear Fe/S proteins. CIAO1:CIAO2A specifically matures ACO1 and stabilizes IREB2. Seems to specifically modulate the transactivation activity of WT1. As part of the mitotic spindle-associated MMXD complex it may play a role in chromosome segregation. The polypeptide is Probable cytosolic iron-sulfur protein assembly protein CIAO1 (Homo sapiens (Human)).